The following is a 127-amino-acid chain: Mediator of RNA polymerase II transcription subunit 31 (127 aa).

Belongs to the Mediator complex subunit 31 family. As to quaternary structure, component of the Mediator complex.

Its subcellular location is the nucleus. In terms of biological role, component of the Mediator complex, a coactivator involved in the regulated transcription of nearly all RNA polymerase II-dependent genes. Mediator functions as a bridge to convey information from gene-specific regulatory proteins to the basal RNA polymerase II transcription machinery. Mediator is recruited to promoters by direct interactions with regulatory proteins and serves as a scaffold for the assembly of a functional preinitiation complex with RNA polymerase II and the general transcription factors. The protein is Mediator of RNA polymerase II transcription subunit 31 (SOH1) of Eremothecium gossypii (strain ATCC 10895 / CBS 109.51 / FGSC 9923 / NRRL Y-1056) (Yeast).